A 415-amino-acid chain; its full sequence is Acrosin (415 aa).

The signal sequence occupies residues 1–16 (MLPTAVLLVLAVSVAA). The N-linked (GlcNAc...) asparagine glycan is linked to asparagine 19. Disulfide bonds link cysteine 22-cysteine 152, cysteine 26-cysteine 160, cysteine 71-cysteine 87, cysteine 175-cysteine 244, cysteine 207-cysteine 223, and cysteine 234-cysteine 264. The 249-residue stretch at 40 to 288 (VVGGMSAEPG…YLNWIASKIG (249 aa)) folds into the Peptidase S1 domain. Catalysis depends on charge relay system residues histidine 86 and aspartate 140. Asparagine 208 is a glycosylation site (N-linked (GlcNAc...) asparagine). Catalysis depends on serine 238, which acts as the Charge relay system. Disordered stretches follow at residues 296-376 (QLGT…PPQA) and 395-415 (FSSGRSYYETETTDLQELPAS). 2 stretches are compositionally biased toward pro residues: residues 300-312 (PPRPSTPAPPVRP) and 328-367 (PPGPSQQPGSRPRPPAPPPAPPPPPPPPPPPPPPPPPPPQ). Residues 339–415 (PRPPAPPPAP…TTDLQELPAS (77 aa)) constitute a propeptide, pro-rich. Residues 395 to 409 (FSSGRSYYETETTDL) are compositionally biased toward polar residues.

It belongs to the peptidase S1 family. In terms of assembly, heavy chain (catalytic) and a light chain linked by two disulfide bonds. Forms a heterodimer with SERPINA5.

It catalyses the reaction Preferential cleavage: Arg-|-Xaa, Lys-|-Xaa.. Inhibited by SERPINA5. Acrosin is the major protease of mammalian spermatozoa. It is a serine protease of trypsin-like cleavage specificity, it is synthesized in a zymogen form, proacrosin and stored in the acrosome. The polypeptide is Acrosin (ACR) (Sus scrofa (Pig)).